The primary structure comprises 385 residues: Protein delta homolog 1 (385 aa).

A signal peptide spans 1-23 (MIATGALLRVLLLLLAFGHSTYG). EGF-like domains lie at 24–55 (AECD…PLCD), 53–86 (LCDK…KFCE), 88–125 (DVRA…KDCQ), 127–168 (KAGP…NFCE), 172–208 (ATNS…KTCS), and 210–247 (PVSN…PTCA). The Extracellular segment spans residues 24 to 305 (AECDPPCDPQ…KSTPLLTEGQ (282 aa)). Cystine bridges form between C26–C37, C30–C43, C45–C54, C57–C68, C63–C74, C76–C85, C92–C103, C97–C113, C115–C124, C131–C144, C138–C156, and C158–C167. S94 carries O-linked (GalNAc...) serine glycosylation. N100 is a glycosylation site (N-linked (GlcNAc...) asparagine). N-linked (GlcNAc...) asparagine; atypical; partial glycosylation occurs at N165. N174 is a glycosylation site (N-linked (GlcNAc...) asparagine; atypical). 6 disulfides stabilise this stretch: C176–C187, C181–C196, C198–C207, C214–C225, C219–C235, and C237–C246. A glycan (O-linked (GalNAc...) serine) is linked at S216. T224 carries an O-linked (GalNAc...) threonine glycan. An O-linked (GalNAc...) threonine glycan is attached at T258. The O-linked (GalNAc...) threonine; partial glycan is linked to T267. T271 carries an O-linked (GalNAc...) threonine glycan. A glycan (N-linked (GlcNAc...) asparagine) is linked at N295. Residues 306–329 (AICFTILGVLTSLVVLGTVAIVFL) traverse the membrane as a helical segment. Residues 330–385 (NKCETWVSNLRYNHTFRKKKNLLLQYNSGEELAVNIIFPEKIDMTTFNKEAGDEEI) are Cytoplasmic-facing.

As to quaternary structure, monomer. Interacts with SH3RF2. Post-translationally, N- and O-glycosylated. In terms of tissue distribution, highly expressed in fetal liver, placenta, adult adrenal gland, brain, testis and ovary and, to a lesser degree, in adult kidney, muscle, thymus and heart.

The protein resides in the membrane. It localises to the cytoplasm. Its function is as follows. May have a role in neuroendocrine differentiation. Inhibits adipocyte differentiation. The polypeptide is Protein delta homolog 1 (Dlk1) (Mus musculus (Mouse)).